Reading from the N-terminus, the 132-residue chain is Interferon-induced transmembrane protein 5 (132 aa).

The segment covering 1 to 11 (MDTAYPREDTR) has biased composition (basic and acidic residues). Residues 1–21 (MDTAYPREDTRAPTPSKAGAH) are disordered. The Extracellular segment spans residues 1–36 (MDTAYPREDTRAPTPSKAGAHTALTLGAPHPPPRDH). A helical membrane pass occupies residues 37–57 (LIWSVFSTLYLNLCCLGFLAL). 3 S-palmitoyl cysteine lipidation sites follow: C50, C51, and C84. At 58-86 (AYSIKARDQKVVGDLEAARRFGSKAKCYN) the chain is on the cytoplasmic side. Residues 87 to 107 (ILAAMWTLVPPLLLLGLVVTG) traverse the membrane as a helical segment. Over 108 to 132 (ALHLARLAKDSAAFFSTKFDDADYD) the chain is Extracellular.

It belongs to the CD225/Dispanin family. In terms of assembly, interacts with FKBP11. Post-translationally, palmitoylated. Detected in osteoblasts and fibroblasts (at protein level). Detected in bone.

The protein resides in the cell membrane. Functionally, required for normal bone mineralization. This is Interferon-induced transmembrane protein 5 (IFITM5) from Homo sapiens (Human).